We begin with the raw amino-acid sequence, 443 residues long: Thymidine phosphorylase (443 aa).

The protein belongs to the thymidine/pyrimidine-nucleoside phosphorylase family. Homodimer.

It catalyses the reaction thymidine + phosphate = 2-deoxy-alpha-D-ribose 1-phosphate + thymine. Its pathway is pyrimidine metabolism; dTMP biosynthesis via salvage pathway; dTMP from thymine: step 1/2. In terms of biological role, the enzymes which catalyze the reversible phosphorolysis of pyrimidine nucleosides are involved in the degradation of these compounds and in their utilization as carbon and energy sources, or in the rescue of pyrimidine bases for nucleotide synthesis. The sequence is that of Thymidine phosphorylase from Shewanella baltica (strain OS185).